A 22-amino-acid polypeptide reads, in one-letter code: Cysteine protease inhibitor 4 (22 aa).

This sequence belongs to the protease inhibitor I3 (leguminous Kunitz-type inhibitor) family. In terms of tissue distribution, tubers.

It is found in the vacuole. Inhibitor of papain (cysteine protease). Does not inhibit trypsin, chymotrypsin nor elastase (serine proteases). May protect the plant by inhibiting proteases of invading organisms. In Solanum tuberosum (Potato), this protein is Cysteine protease inhibitor 4.